A 448-amino-acid chain; its full sequence is Exodeoxyribonuclease 7 large subunit (448 aa).

It belongs to the XseA family. In terms of assembly, heterooligomer composed of large and small subunits.

The protein localises to the cytoplasm. It catalyses the reaction Exonucleolytic cleavage in either 5'- to 3'- or 3'- to 5'-direction to yield nucleoside 5'-phosphates.. Functionally, bidirectionally degrades single-stranded DNA into large acid-insoluble oligonucleotides, which are then degraded further into small acid-soluble oligonucleotides. The protein is Exodeoxyribonuclease 7 large subunit of Shewanella baltica (strain OS195).